The chain runs to 600 residues: Aspartate--tRNA(Asp/Asn) ligase (600 aa).

Residue Glu-183 coordinates L-aspartate. The aspartate stretch occupies residues 207–210; it reads QLFK. Arg-229 is a binding site for L-aspartate. ATP is bound by residues 229–231 and Gln-238; that span reads RDE. Residue His-456 participates in L-aspartate binding. Position 490 (Glu-490) interacts with ATP. Position 497 (Arg-497) interacts with L-aspartate. Position 542-545 (542-545) interacts with ATP; the sequence is GLDR.

The protein belongs to the class-II aminoacyl-tRNA synthetase family. Type 1 subfamily. In terms of assembly, homodimer.

The protein localises to the cytoplasm. It carries out the reaction tRNA(Asx) + L-aspartate + ATP = L-aspartyl-tRNA(Asx) + AMP + diphosphate. Its function is as follows. Aspartyl-tRNA synthetase with relaxed tRNA specificity since it is able to aspartylate not only its cognate tRNA(Asp) but also tRNA(Asn). Reaction proceeds in two steps: L-aspartate is first activated by ATP to form Asp-AMP and then transferred to the acceptor end of tRNA(Asp/Asn). This is Aspartate--tRNA(Asp/Asn) ligase from Moorella thermoacetica (strain ATCC 39073 / JCM 9320).